Consider the following 99-residue polypeptide: MSKQAVLLDEAARQSLYSSCPAWTIASDGLVREWRFHSFVEAFGFMTQVALLAERANHHPEWSNVYNRVTIRLTTHDLGGLSSRDAELAQAIDSLSPTT.

Belongs to the pterin-4-alpha-carbinolamine dehydratase family.

The enzyme catalyses (4aS,6R)-4a-hydroxy-L-erythro-5,6,7,8-tetrahydrobiopterin = (6R)-L-erythro-6,7-dihydrobiopterin + H2O. The chain is Putative pterin-4-alpha-carbinolamine dehydratase from Synechococcus sp. (strain CC9311).